The primary structure comprises 25 residues: Cruzioseptin-13 (25 aa).

Position 25 is an asparagine amide (asparagine 25).

As to expression, expressed by the skin glands.

It is found in the secreted. Functionally, has antimicrobial activity. This is Cruzioseptin-13 from Cruziohyla calcarifer (Splendid leaf frog).